A 407-amino-acid polypeptide reads, in one-letter code: Multifunctional CCA protein (407 aa).

Positions 8 and 11 each coordinate ATP. Positions 8 and 11 each coordinate CTP. Residues Asp21 and Asp23 each coordinate Mg(2+). Residues Arg91, Arg137, and Arg140 each coordinate ATP. CTP-binding residues include Arg91, Arg137, and Arg140. Residues 228–329 (TGIHTLLVAE…VKIFNKLDVW (102 aa)) form the HD domain.

Belongs to the tRNA nucleotidyltransferase/poly(A) polymerase family. Bacterial CCA-adding enzyme type 1 subfamily. As to quaternary structure, monomer. Can also form homodimers and oligomers. It depends on Mg(2+) as a cofactor. Ni(2+) serves as cofactor.

The catalysed reaction is a tRNA precursor + 2 CTP + ATP = a tRNA with a 3' CCA end + 3 diphosphate. The enzyme catalyses a tRNA with a 3' CCA end + 2 CTP + ATP = a tRNA with a 3' CCACCA end + 3 diphosphate. Catalyzes the addition and repair of the essential 3'-terminal CCA sequence in tRNAs without using a nucleic acid template. Adds these three nucleotides in the order of C, C, and A to the tRNA nucleotide-73, using CTP and ATP as substrates and producing inorganic pyrophosphate. tRNA 3'-terminal CCA addition is required both for tRNA processing and repair. Also involved in tRNA surveillance by mediating tandem CCA addition to generate a CCACCA at the 3' terminus of unstable tRNAs. While stable tRNAs receive only 3'-terminal CCA, unstable tRNAs are marked with CCACCA and rapidly degraded. This chain is Multifunctional CCA protein, found in Vibrio vulnificus (strain YJ016).